A 252-amino-acid polypeptide reads, in one-letter code: Large ribosomal subunit protein uL4 (252 aa).

It belongs to the universal ribosomal protein uL4 family. As to quaternary structure, part of the 50S ribosomal subunit.

In terms of biological role, one of the primary rRNA binding proteins, this protein initially binds near the 5'-end of the 23S rRNA. It is important during the early stages of 50S assembly. It makes multiple contacts with different domains of the 23S rRNA in the assembled 50S subunit and ribosome. Its function is as follows. Forms part of the polypeptide exit tunnel. This Methanococcus maripaludis (strain C6 / ATCC BAA-1332) protein is Large ribosomal subunit protein uL4.